A 340-amino-acid chain; its full sequence is Cytosolic Fe-S cluster assembly factor NBP35 (340 aa).

Residues Cys-31, Cys-45, Cys-48, and Cys-54 each contribute to the [4Fe-4S] cluster site. An ATP-binding site is contributed by 84–91 (GKGGVGKS). [4Fe-4S] cluster contacts are provided by Cys-257 and Cys-260.

Belongs to the Mrp/NBP35 ATP-binding proteins family. NUBP1/NBP35 subfamily. As to quaternary structure, heterotetramer of 2 NBP35 and 2 CFD1 chains. [4Fe-4S] cluster serves as cofactor.

It localises to the cytoplasm. In terms of biological role, component of the cytosolic iron-sulfur (Fe/S) protein assembly (CIA) machinery. Required for maturation of extramitochondrial Fe-S proteins. The NBP35-CFD1 heterotetramer forms a Fe-S scaffold complex, mediating the de novo assembly of an Fe-S cluster and its transfer to target apoproteins. The protein is Cytosolic Fe-S cluster assembly factor NBP35 of Phaeosphaeria nodorum (strain SN15 / ATCC MYA-4574 / FGSC 10173) (Glume blotch fungus).